The sequence spans 539 residues: Chaperonin GroEL 2 (539 aa).

Residues 29–32 (TLGP), 86–90 (DGTTT), Gly-413, 477–479 (NAA), and Asp-493 each bind ATP. The tract at residues 519 to 539 (VVDKPEEEDSAAAGHGHGHSH) is disordered.

The protein belongs to the chaperonin (HSP60) family. Forms a cylinder of 14 subunits composed of two heptameric rings stacked back-to-back. Interacts with the co-chaperonin GroES.

The protein resides in the cytoplasm. It carries out the reaction ATP + H2O + a folded polypeptide = ADP + phosphate + an unfolded polypeptide.. Its function is as follows. Together with its co-chaperonin GroES, plays an essential role in assisting protein folding. The GroEL-GroES system forms a nano-cage that allows encapsulation of the non-native substrate proteins and provides a physical environment optimized to promote and accelerate protein folding. The polypeptide is Chaperonin GroEL 2 (Saccharopolyspora erythraea (strain ATCC 11635 / DSM 40517 / JCM 4748 / NBRC 13426 / NCIMB 8594 / NRRL 2338)).